The primary structure comprises 244 residues: tRNA (guanine-N(1)-)-methyltransferase (244 aa).

S-adenosyl-L-methionine-binding positions include Gly111 and 130 to 135; that span reads IGDYVL.

Belongs to the RNA methyltransferase TrmD family. As to quaternary structure, homodimer.

Its subcellular location is the cytoplasm. It carries out the reaction guanosine(37) in tRNA + S-adenosyl-L-methionine = N(1)-methylguanosine(37) in tRNA + S-adenosyl-L-homocysteine + H(+). In terms of biological role, specifically methylates guanosine-37 in various tRNAs. This is tRNA (guanine-N(1)-)-methyltransferase from Phytoplasma australiense.